A 206-amino-acid polypeptide reads, in one-letter code: uncharacterized protein (206 aa).

This is an uncharacterized protein from Saccharomyces cerevisiae (strain ATCC 204508 / S288c) (Baker's yeast).